The chain runs to 89 residues: Large ribosomal subunit protein eL34 (89 aa).

The interval 1 to 22 (MPAPRYKSGSSKKVYRKAPGNS) is disordered.

It belongs to the eukaryotic ribosomal protein eL34 family.

The polypeptide is Large ribosomal subunit protein eL34 (Methanococcus maripaludis (strain C5 / ATCC BAA-1333)).